We begin with the raw amino-acid sequence, 351 residues long: Alanine racemase (351 aa).

The active-site Proton acceptor; specific for D-alanine is lysine 35. Lysine 35 is subject to N6-(pyridoxal phosphate)lysine. Arginine 127 is a substrate binding site. The active-site Proton acceptor; specific for L-alanine is the tyrosine 247. Methionine 295 serves as a coordination point for substrate.

It belongs to the alanine racemase family. Pyridoxal 5'-phosphate serves as cofactor.

The catalysed reaction is L-alanine = D-alanine. It participates in amino-acid biosynthesis; D-alanine biosynthesis; D-alanine from L-alanine: step 1/1. Catalyzes the interconversion of L-alanine and D-alanine. May also act on other amino acids. This chain is Alanine racemase (alr), found in Vesicomyosocius okutanii subsp. Calyptogena okutanii (strain HA).